Reading from the N-terminus, the 191-residue chain is Peptidyl-tRNA hydrolase (191 aa).

Residue Y14 coordinates tRNA. Catalysis depends on H19, which acts as the Proton acceptor. 3 residues coordinate tRNA: Y64, N66, and N112.

Belongs to the PTH family. As to quaternary structure, monomer.

The protein localises to the cytoplasm. It carries out the reaction an N-acyl-L-alpha-aminoacyl-tRNA + H2O = an N-acyl-L-amino acid + a tRNA + H(+). Its function is as follows. Hydrolyzes ribosome-free peptidyl-tRNAs (with 1 or more amino acids incorporated), which drop off the ribosome during protein synthesis, or as a result of ribosome stalling. In terms of biological role, catalyzes the release of premature peptidyl moieties from peptidyl-tRNA molecules trapped in stalled 50S ribosomal subunits, and thus maintains levels of free tRNAs and 50S ribosomes. This chain is Peptidyl-tRNA hydrolase, found in Syntrophotalea carbinolica (strain DSM 2380 / NBRC 103641 / GraBd1) (Pelobacter carbinolicus).